The sequence spans 132 residues: Small ribosomal subunit protein uS8 (132 aa).

This sequence belongs to the universal ribosomal protein uS8 family. Part of the 30S ribosomal subunit. Contacts proteins S5 and S12.

One of the primary rRNA binding proteins, it binds directly to 16S rRNA central domain where it helps coordinate assembly of the platform of the 30S subunit. The protein is Small ribosomal subunit protein uS8 of Rickettsia typhi (strain ATCC VR-144 / Wilmington).